The sequence spans 321 residues: Lipoyl synthase (321 aa).

Residues Cys-68, Cys-73, Cys-79, Cys-94, Cys-98, Cys-101, and Ser-308 each contribute to the [4Fe-4S] cluster site. Positions 80-297 constitute a Radical SAM core domain; it reads FNHGTATFMI…KAEALAMGFT (218 aa).

Belongs to the radical SAM superfamily. Lipoyl synthase family. [4Fe-4S] cluster serves as cofactor.

It is found in the cytoplasm. The enzyme catalyses [[Fe-S] cluster scaffold protein carrying a second [4Fe-4S](2+) cluster] + N(6)-octanoyl-L-lysyl-[protein] + 2 oxidized [2Fe-2S]-[ferredoxin] + 2 S-adenosyl-L-methionine + 4 H(+) = [[Fe-S] cluster scaffold protein] + N(6)-[(R)-dihydrolipoyl]-L-lysyl-[protein] + 4 Fe(3+) + 2 hydrogen sulfide + 2 5'-deoxyadenosine + 2 L-methionine + 2 reduced [2Fe-2S]-[ferredoxin]. It participates in protein modification; protein lipoylation via endogenous pathway; protein N(6)-(lipoyl)lysine from octanoyl-[acyl-carrier-protein]: step 2/2. Catalyzes the radical-mediated insertion of two sulfur atoms into the C-6 and C-8 positions of the octanoyl moiety bound to the lipoyl domains of lipoate-dependent enzymes, thereby converting the octanoylated domains into lipoylated derivatives. The polypeptide is Lipoyl synthase (Salmonella paratyphi A (strain AKU_12601)).